A 975-amino-acid polypeptide reads, in one-letter code: Ionotropic receptor 21a (975 aa).

An N-terminal signal peptide occupies residues 1–21 (MFKRIVLAVINLVFLIVSTTA). Asparagine 67, asparagine 177, and asparagine 355 each carry an N-linked (GlcNAc...) asparagine glycan. Residues 433 to 453 (WPVWVAVILIYLLAIFPLAFS) traverse the membrane as a helical segment. Asparagine 464 carries an N-linked (GlcNAc...) asparagine glycan. A helical membrane pass occupies residues 505-525 (IYWVFTIIITACYTGSIIAFI). N-linked (GlcNAc...) asparagine glycans are attached at residues asparagine 561, asparagine 586, and asparagine 611. The helical transmembrane segment at 708–728 (MFLLMLFGYVVALGVLISEWV) threads the bilayer. Disordered regions lie at residues 757-839 (ATAG…HSLS) and 911-938 (SPHS…RKEM). 2 stretches are compositionally biased toward polar residues: residues 760–777 (GSDN…TNRN) and 788–800 (VENS…NGSA). N-linked (GlcNAc...) asparagine glycans are attached at residues asparagine 763 and asparagine 797.

This sequence belongs to the glutamate-gated ion channel (TC 1.A.10.1) family. In both female and male antenna, expressed specifically in 3 sensory neurons of flagellomere 13 segment (at protein level).

Its subcellular location is the cell projection. The protein localises to the cilium membrane. Integral part of a neural sensory system in the antenna that provides the neural basis for the response to environmental changes in temperature (thermosensation). Specifically, required for thermosensing by the cooling cell. Plays a role in heat seeking and heat-stimulated blood feeding behavior. In Anopheles gambiae (African malaria mosquito), this protein is Ionotropic receptor 21a.